Reading from the N-terminus, the 206-residue chain is MKRPVLIGITGGTGSGKSTVAKEIYNKFDEACIAMIEQDSYYKDQSSIPFEERCKKNYDHPDAFDNELLIDHLKNLVDLNVIEKPIYDFEAHNRKEETIKVEPRDIIIVEGILVLQDPRVRELLDIKIYVDTDADVRIIRRLLRDINERGRTVDSVINQYLTVVRPMHMQFIEPSKRYADIIIPEGGHNRVAVDMMVANIKHLLQK.

11 to 18 (GGTGSGKS) contacts ATP.

This sequence belongs to the uridine kinase family.

Its subcellular location is the cytoplasm. It carries out the reaction uridine + ATP = UMP + ADP + H(+). The catalysed reaction is cytidine + ATP = CMP + ADP + H(+). It participates in pyrimidine metabolism; CTP biosynthesis via salvage pathway; CTP from cytidine: step 1/3. It functions in the pathway pyrimidine metabolism; UMP biosynthesis via salvage pathway; UMP from uridine: step 1/1. The sequence is that of Uridine kinase from Clostridium botulinum (strain 657 / Type Ba4).